We begin with the raw amino-acid sequence, 927 residues long: UPF0182 protein bll7333 (927 aa).

The next 7 membrane-spanning stretches (helical) occupy residues 17 to 37, 65 to 85, 134 to 154, 185 to 205, 220 to 240, 264 to 284, and 297 to 317; these read AVVGLIIAALVIAIVLTLLAL, AVVFLAVWTATAVILLLNGWL, LALLVAAAEAGNWGVFLQFVY, WMMLALALSALFAAAIYLVHG, VIAHGSALLGLLFAVKAWSFG, VGLPALWLMIGLSGIAALAAW, and AAFLLVAIGSFVLSGLVPVLF.

Belongs to the UPF0182 family.

Its subcellular location is the cell membrane. The chain is UPF0182 protein bll7333 from Bradyrhizobium diazoefficiens (strain JCM 10833 / BCRC 13528 / IAM 13628 / NBRC 14792 / USDA 110).